The chain runs to 151 residues: Cytochrome c-type biogenesis protein CcmE (151 aa).

The Cytoplasmic portion of the chain corresponds to 1-9 (MKGLKKKRR). A helical; Signal-anchor for type II membrane protein membrane pass occupies residues 10–30 (IQIIALAFVALAGSTALIGYA). Residues 31–151 (MRDGINFFRS…FQHTEDQPQG (121 aa)) are Periplasmic-facing. Heme is bound by residues His-123 and Tyr-127.

This sequence belongs to the CcmE/CycJ family.

It is found in the cell inner membrane. In terms of biological role, heme chaperone required for the biogenesis of c-type cytochromes. Transiently binds heme delivered by CcmC and transfers the heme to apo-cytochromes in a process facilitated by CcmF and CcmH. This is Cytochrome c-type biogenesis protein CcmE from Cereibacter sphaeroides (strain ATCC 17029 / ATH 2.4.9) (Rhodobacter sphaeroides).